The following is a 264-amino-acid chain: 3-methyl-2-oxobutanoate hydroxymethyltransferase (264 aa).

Residues Asp45 and Asp84 each contribute to the Mg(2+) site. 3-methyl-2-oxobutanoate is bound by residues Asp45–Ser46, Asp84, and Lys112. Glu114 serves as a coordination point for Mg(2+). Residue Glu181 is the Proton acceptor of the active site.

The protein belongs to the PanB family. As to quaternary structure, homodecamer; pentamer of dimers. Mg(2+) serves as cofactor.

The protein localises to the cytoplasm. It carries out the reaction 3-methyl-2-oxobutanoate + (6R)-5,10-methylene-5,6,7,8-tetrahydrofolate + H2O = 2-dehydropantoate + (6S)-5,6,7,8-tetrahydrofolate. Its pathway is cofactor biosynthesis; (R)-pantothenate biosynthesis; (R)-pantoate from 3-methyl-2-oxobutanoate: step 1/2. Functionally, catalyzes the reversible reaction in which hydroxymethyl group from 5,10-methylenetetrahydrofolate is transferred onto alpha-ketoisovalerate to form ketopantoate. In Shigella flexneri serotype 5b (strain 8401), this protein is 3-methyl-2-oxobutanoate hydroxymethyltransferase.